Consider the following 185-residue polypeptide: Peptidyl-tRNA hydrolase (185 aa).

Residue Tyr14 coordinates tRNA. His19 acts as the Proton acceptor in catalysis. Residues Phe64, Asn66, and Asn112 each contribute to the tRNA site.

Belongs to the PTH family. Monomer.

Its subcellular location is the cytoplasm. It catalyses the reaction an N-acyl-L-alpha-aminoacyl-tRNA + H2O = an N-acyl-L-amino acid + a tRNA + H(+). In terms of biological role, hydrolyzes ribosome-free peptidyl-tRNAs (with 1 or more amino acids incorporated), which drop off the ribosome during protein synthesis, or as a result of ribosome stalling. Functionally, catalyzes the release of premature peptidyl moieties from peptidyl-tRNA molecules trapped in stalled 50S ribosomal subunits, and thus maintains levels of free tRNAs and 50S ribosomes. The chain is Peptidyl-tRNA hydrolase from Latilactobacillus sakei subsp. sakei (strain 23K) (Lactobacillus sakei subsp. sakei).